We begin with the raw amino-acid sequence, 20 residues long: Transcriptional regulatory protein PufK (20 aa).

Residues 1-11 show a composition bias toward basic residues; the sequence is MVPYRNPRHQH. Residues 1–20 form a disordered region; sequence MVPYRNPRHQHVASVLRSGG.

Its function is as follows. Involved in the transcriptional regulation of pufB. The polypeptide is Transcriptional regulatory protein PufK (pufK) (Cereibacter sphaeroides (strain ATCC 17023 / DSM 158 / JCM 6121 / CCUG 31486 / LMG 2827 / NBRC 12203 / NCIMB 8253 / ATH 2.4.1.) (Rhodobacter sphaeroides)).